The following is a 113-amino-acid chain: uncharacterized protein (113 aa).

It belongs to the HesB/IscA family.

This is an uncharacterized protein from Synechocystis sp. (strain ATCC 27184 / PCC 6803 / Kazusa).